A 231-amino-acid polypeptide reads, in one-letter code: 7-cyano-7-deazaguanine synthase (231 aa).

8–18 (FSGGQDSTTCL) contributes to the ATP binding site. Zn(2+) is bound by residues Cys188, Cys197, Cys200, and Cys203.

Belongs to the QueC family. Zn(2+) serves as cofactor.

It carries out the reaction 7-carboxy-7-deazaguanine + NH4(+) + ATP = 7-cyano-7-deazaguanine + ADP + phosphate + H2O + H(+). It functions in the pathway purine metabolism; 7-cyano-7-deazaguanine biosynthesis. In terms of biological role, catalyzes the ATP-dependent conversion of 7-carboxy-7-deazaguanine (CDG) to 7-cyano-7-deazaguanine (preQ(0)). This is 7-cyano-7-deazaguanine synthase from Escherichia coli O1:K1 / APEC.